The following is a 443-amino-acid chain: 23S rRNA (uracil(1939)-C(5))-methyltransferase RlmD (443 aa).

A TRAM domain is found at 12–70; that stretch reads AKKLSQKIALKVQRLDHLGAGIAEHQGKVVFIPGALPGETVEVQLTEQKKNYARAKLQR. [4Fe-4S] cluster-binding residues include cysteine 83, cysteine 89, cysteine 92, and cysteine 171. Glutamine 276, phenylalanine 305, asparagine 310, glutamate 326, aspartate 353, and aspartate 373 together coordinate S-adenosyl-L-methionine. Cysteine 399 functions as the Nucleophile in the catalytic mechanism.

The protein belongs to the class I-like SAM-binding methyltransferase superfamily. RNA M5U methyltransferase family. RlmD subfamily.

The catalysed reaction is uridine(1939) in 23S rRNA + S-adenosyl-L-methionine = 5-methyluridine(1939) in 23S rRNA + S-adenosyl-L-homocysteine + H(+). Catalyzes the formation of 5-methyl-uridine at position 1939 (m5U1939) in 23S rRNA. The protein is 23S rRNA (uracil(1939)-C(5))-methyltransferase RlmD of Shewanella amazonensis (strain ATCC BAA-1098 / SB2B).